The primary structure comprises 238 residues: Ubiquinone/menaquinone biosynthesis C-methyltransferase UbiE (238 aa).

S-adenosyl-L-methionine is bound by residues threonine 62 and aspartate 82.

This sequence belongs to the class I-like SAM-binding methyltransferase superfamily. MenG/UbiE family.

It carries out the reaction a 2-demethylmenaquinol + S-adenosyl-L-methionine = a menaquinol + S-adenosyl-L-homocysteine + H(+). The enzyme catalyses a 2-methoxy-6-(all-trans-polyprenyl)benzene-1,4-diol + S-adenosyl-L-methionine = a 5-methoxy-2-methyl-3-(all-trans-polyprenyl)benzene-1,4-diol + S-adenosyl-L-homocysteine + H(+). Its pathway is quinol/quinone metabolism; menaquinone biosynthesis; menaquinol from 1,4-dihydroxy-2-naphthoate: step 2/2. It functions in the pathway cofactor biosynthesis; ubiquinone biosynthesis. In terms of biological role, methyltransferase required for the conversion of demethylmenaquinol (DMKH2) to menaquinol (MKH2) and the conversion of 2-polyprenyl-6-methoxy-1,4-benzoquinol (DDMQH2) to 2-polyprenyl-3-methyl-6-methoxy-1,4-benzoquinol (DMQH2). This Wolbachia pipientis wMel protein is Ubiquinone/menaquinone biosynthesis C-methyltransferase UbiE.